The primary structure comprises 149 residues: Large ribosomal subunit protein uL11 (149 aa).

It belongs to the universal ribosomal protein uL11 family. Part of the ribosomal stalk of the 50S ribosomal subunit. Interacts with L10 and the large rRNA to form the base of the stalk. L10 forms an elongated spine to which L12 dimers bind in a sequential fashion forming a multimeric L10(L12)X complex. One or more lysine residues are methylated.

Functionally, forms part of the ribosomal stalk which helps the ribosome interact with GTP-bound translation factors. The sequence is that of Large ribosomal subunit protein uL11 from Methylobacterium radiotolerans (strain ATCC 27329 / DSM 1819 / JCM 2831 / NBRC 15690 / NCIMB 10815 / 0-1).